The sequence spans 610 residues: Probable methyltransferase PMT22 (610 aa).

Residues 1–10 (MIKNIFQSRK) lie on the Cytoplasmic side of the membrane. A helical; Signal-anchor for type II membrane protein membrane pass occupies residues 11–31 (LSGLCVLSILLVSVTILLLTN). The Lumenal portion of the chain corresponds to 32–610 (DTIDLFPYLS…LVGLKSSWRP (579 aa)). Low complexity predominate over residues 56–69 (STPISSPTNDSSPP). The tract at residues 56-81 (STPISSPTNDSSPPLESPVNQTRVDD) is disordered. Residues Asn64, Asn75, Asn100, Asn400, Asn469, and Asn546 are each glycosylated (N-linked (GlcNAc...) asparagine).

It belongs to the methyltransferase superfamily.

The protein resides in the endoplasmic reticulum membrane. The polypeptide is Probable methyltransferase PMT22 (Arabidopsis thaliana (Mouse-ear cress)).